The sequence spans 195 residues: MPVGVPKVPFRLPGEEDASWVDLYNRLYRQRLLFLGQDVNNEISNQIMGLMVYLSIEDGTKDQYLFINSPGGSVIPGVGLFDTMQFVSPDVHTICIGLAASMGSFILVGGEITKRLAFPHARVMIHQPASSFSKGKTGEFVLESTELLNLRETITKVYVQRTGKPLWVISEDLERDVFMSAPEAQAHGIVDLVAV.

The Nucleophile role is filled by S101. H126 is a catalytic residue.

The protein belongs to the peptidase S14 family. Component of the chloroplastic Clp protease core complex.

It localises to the plastid. It is found in the chloroplast stroma. The enzyme catalyses Hydrolysis of proteins to small peptides in the presence of ATP and magnesium. alpha-casein is the usual test substrate. In the absence of ATP, only oligopeptides shorter than five residues are hydrolyzed (such as succinyl-Leu-Tyr-|-NHMec, and Leu-Tyr-Leu-|-Tyr-Trp, in which cleavage of the -Tyr-|-Leu- and -Tyr-|-Trp bonds also occurs).. In terms of biological role, cleaves peptides in various proteins in a process that requires ATP hydrolysis. Has a chymotrypsin-like activity. Plays a major role in the degradation of misfolded proteins. The chain is ATP-dependent Clp protease proteolytic subunit from Cucumis sativus (Cucumber).